Consider the following 686-residue polypeptide: UvrABC system protein C (686 aa).

Over residues 1–14 (MVHDSTDDPDDTRV) the composition is skewed to basic and acidic residues. Positions 1–48 (MVHDSTDDPDDTRVRKSRRGTALDAPPQETAPPDLDPATTGGDDEDDA) are disordered. In terms of domain architecture, GIY-YIG spans 81–160 (TSPGVYRMLN…IKQLRPRFNV (80 aa)). The 36-residue stretch at 270–305 (HAVKQELAGEMEKAANELEFETAALYRDRLAALSAI) folds into the UVR domain.

This sequence belongs to the UvrC family. As to quaternary structure, interacts with UvrB in an incision complex.

The protein resides in the cytoplasm. The UvrABC repair system catalyzes the recognition and processing of DNA lesions. UvrC both incises the 5' and 3' sides of the lesion. The N-terminal half is responsible for the 3' incision and the C-terminal half is responsible for the 5' incision. The sequence is that of UvrABC system protein C from Bradyrhizobium diazoefficiens (strain JCM 10833 / BCRC 13528 / IAM 13628 / NBRC 14792 / USDA 110).